The sequence spans 193 residues: UMP-CMP kinase (193 aa).

Residue 13–18 (GAGKGT) coordinates ATP. The segment at 33 to 63 (SAGDLLRDERKKPDSQYGELIESYIRDGKIV) is NMP. Residues Arg-39, 61 to 63 (KIV), and 93 to 96 (GFPR) contribute to the a ribonucleoside 5'-phosphate site. Asn-100 contributes to the CMP binding site. The interval 133 to 143 (ERGKSSGRSDD) is LID. ATP is bound at residue Arg-134. A ribonucleoside 5'-phosphate contacts are provided by Arg-140 and Arg-151. Lys-179 provides a ligand contact to ATP.

Belongs to the adenylate kinase family. UMP-CMP kinase subfamily. As to quaternary structure, monomer. The cofactor is Mg(2+).

Its subcellular location is the nucleus. The protein localises to the cytoplasm. It catalyses the reaction CMP + ATP = CDP + ADP. The enzyme catalyses dCMP + ATP = dCDP + ADP. It carries out the reaction UMP + ATP = UDP + ADP. The catalysed reaction is a 2'-deoxyribonucleoside 5'-diphosphate + ATP = a 2'-deoxyribonucleoside 5'-triphosphate + ADP. It catalyses the reaction a ribonucleoside 5'-diphosphate + ATP = a ribonucleoside 5'-triphosphate + ADP. Functionally, catalyzes the phosphorylation of pyrimidine nucleoside monophosphates at the expense of ATP. Plays an important role in de novo pyrimidine nucleotide biosynthesis. Has preference for UMP and CMP as phosphate acceptors. Also displays broad nucleoside diphosphate kinase activity. The sequence is that of UMP-CMP kinase (cmpk1) from Xenopus laevis (African clawed frog).